The sequence spans 200 residues: ATP-dependent Clp protease proteolytic subunit (200 aa).

Ser96 acts as the Nucleophile in catalysis. His121 is a catalytic residue.

Belongs to the peptidase S14 family. As to quaternary structure, fourteen ClpP subunits assemble into 2 heptameric rings which stack back to back to give a disk-like structure with a central cavity, resembling the structure of eukaryotic proteasomes.

The protein localises to the cytoplasm. It catalyses the reaction Hydrolysis of proteins to small peptides in the presence of ATP and magnesium. alpha-casein is the usual test substrate. In the absence of ATP, only oligopeptides shorter than five residues are hydrolyzed (such as succinyl-Leu-Tyr-|-NHMec, and Leu-Tyr-Leu-|-Tyr-Trp, in which cleavage of the -Tyr-|-Leu- and -Tyr-|-Trp bonds also occurs).. In terms of biological role, cleaves peptides in various proteins in a process that requires ATP hydrolysis. Has a chymotrypsin-like activity. Plays a major role in the degradation of misfolded proteins. The chain is ATP-dependent Clp protease proteolytic subunit from Leuconostoc citreum (strain KM20).